We begin with the raw amino-acid sequence, 851 residues long: DNA mismatch repair protein MutS (851 aa).

614–621 (GPNMGGKS) provides a ligand contact to ATP.

The protein belongs to the DNA mismatch repair MutS family.

In terms of biological role, this protein is involved in the repair of mismatches in DNA. It is possible that it carries out the mismatch recognition step. This protein has a weak ATPase activity. This is DNA mismatch repair protein MutS from Yersinia enterocolitica serotype O:8 / biotype 1B (strain NCTC 13174 / 8081).